We begin with the raw amino-acid sequence, 316 residues long: Protein U25 (316 aa).

It belongs to the herpesviridae US22 family.

This Human herpesvirus 6B (HHV-6 variant B) protein is Protein U25 (U25).